Consider the following 279-residue polypeptide: NADPH-dependent 7-cyano-7-deazaguanine reductase (279 aa).

Position 86-88 (86-88 (IES)) interacts with substrate. 88–89 (SK) contributes to the NADPH binding site. The active-site Thioimide intermediate is the cysteine 186. The active-site Proton donor is aspartate 193. 225-226 (HE) is a binding site for substrate. NADPH is bound at residue 254–255 (RG).

Belongs to the GTP cyclohydrolase I family. QueF type 2 subfamily. As to quaternary structure, homodimer.

It localises to the cytoplasm. It catalyses the reaction 7-aminomethyl-7-carbaguanine + 2 NADP(+) = 7-cyano-7-deazaguanine + 2 NADPH + 3 H(+). The protein operates within tRNA modification; tRNA-queuosine biosynthesis. Functionally, catalyzes the NADPH-dependent reduction of 7-cyano-7-deazaguanine (preQ0) to 7-aminomethyl-7-deazaguanine (preQ1). The chain is NADPH-dependent 7-cyano-7-deazaguanine reductase from Chromobacterium violaceum (strain ATCC 12472 / DSM 30191 / JCM 1249 / CCUG 213 / NBRC 12614 / NCIMB 9131 / NCTC 9757 / MK).